Here is a 576-residue protein sequence, read N- to C-terminus: Enolase 4 (576 aa).

The interval 187-232 is disordered; the sequence is ELRNEAMSEAPPQATPTSAPAKDKKGNDKGKKGNITENPLPPAEPP. Low complexity predominate over residues 196–206; sequence APPQATPTSAP. Residues 207–217 show a composition bias toward basic and acidic residues; sequence AKDKKGNDKGK. Residues E302 and K524 each coordinate substrate.

The protein belongs to the enolase family.

The catalysed reaction is (2R)-2-phosphoglycerate = phosphoenolpyruvate + H2O. The protein operates within carbohydrate degradation; glycolysis; pyruvate from D-glyceraldehyde 3-phosphate: step 4/5. This is Enolase 4 (eno4) from Danio rerio (Zebrafish).